The following is a 328-amino-acid chain: Interleukin-12 subunit beta (328 aa).

Residues 1–22 (MCHQQLVISWFSLVFLASPLMA) form the signal peptide. Residues 29–106 (DVYVVELDWY…LSHSLLLLHK (78 aa)) enclose the Ig-like C2-type domain. Residues C50 and C90 are joined by a disulfide bond. Residues N125, N135, N222, and N303 are each glycosylated (N-linked (GlcNAc...) asparagine). A Fibronectin type-III domain is found at 237–328 (PPKNLQLKPL…WSEWASVPCS (92 aa)).

This sequence belongs to the IL-12B family. In terms of assembly, heterodimer with IL12A; disulfide-linked. The heterodimer is known as interleukin IL-12. Heterodimer with IL23A; disulfide-linked. The heterodimer is known as interleukin IL-23. Also secreted as a monomer. Interacts with NBR1; this interaction promotes IL-12 secretion.

Its subcellular location is the secreted. Cytokine that can act as a growth factor for activated T and NK cells, enhance the lytic activity of NK/lymphokine-activated killer cells, and stimulate the production of IFN-gamma by resting PBMC. In terms of biological role, associates with IL23A to form the IL-23 interleukin, a heterodimeric cytokine which functions in innate and adaptive immunity. IL-23 may constitute with IL-17 an acute response to infection in peripheral tissues. IL-23 binds to a heterodimeric receptor complex composed of IL12RB1 and IL23R, activates the Jak-Stat signaling cascade, stimulates memory rather than naive T-cells and promotes production of pro-inflammatory cytokines. IL-23 induces autoimmune inflammation and thus may be responsible for autoimmune inflammatory diseases and may be important for tumorigenesis. This is Interleukin-12 subunit beta (IL12B) from Papio anubis (Olive baboon).